Consider the following 46-residue polypeptide: Antimicrobial peptide eNAP-1 (46 aa).

2 disulfide bridges follow: C4–C16 and C10–C26.

This sequence belongs to the granulin family.

The protein localises to the secreted. Its function is as follows. Has antimicrobial activity against Gram-negative and Gram-positive bacteria. The protein is Antimicrobial peptide eNAP-1 of Equus caballus (Horse).